A 402-amino-acid chain; its full sequence is Guanine nucleotide-binding protein subunit alpha-1 (402 aa).

Positions 1 to 12 are enriched in polar residues; sequence MGCSASKPSEPS. Residues 1–70 are disordered; it reads MGCSASKPSE…PEPQKPAEPA (70 aa). Residue Gly-2 is the site of N-myristoyl glycine attachment. Cys-3 is lipidated: S-palmitoyl cysteine. The span at 23-33 shows a compositional bias: basic and acidic residues; it reads KKVEQVPEPKP. The span at 34 to 69 shows a compositional bias: pro residues; the sequence is EPQPQPEPQPQPEPPKPAEPAPAPAPAPEPQKPAEP. A G-alpha domain is found at 82 to 402; it reads EAYGLLLCGA…FISDKYYQDA (321 aa). A G1 motif region spans residues 85 to 98; the sequence is GLLLCGAGESGKTT. Glu-93, Ser-94, Gly-95, Lys-96, Thr-97, Thr-98, Asp-198, Leu-223, Ser-229, Gly-251, Asn-317, Lys-318, Asp-320, and Ala-377 together coordinate GTP. Thr-97 is a binding site for Mg(2+). Residues 221-229 are G2 motif; it reads DVLRARIRS. Ser-229 lines the Mg(2+) pocket. The interval 244–253 is G3 motif; it reads IRIFDVGGQK. The interval 313-320 is G4 motif; that stretch reads FLVCNKFD. Residues 375 to 380 are G5 motif; the sequence is IVALNG.

This sequence belongs to the G-alpha family. As to quaternary structure, g proteins are composed of 3 units; alpha, beta and gamma. The alpha chain contains the guanine nucleotide binding site. Mg(2+) serves as cofactor.

The protein localises to the cytoplasm. It is found in the perinuclear region. It localises to the endomembrane system. Functionally, guanine nucleotide-binding proteins (G proteins) are involved as modulators or transducers in various transmembrane signaling systems. This Trichomonas vaginalis protein is Guanine nucleotide-binding protein subunit alpha-1 (GA1).